The chain runs to 215 residues: Beta-crystallin A3 (215 aa).

Met1 carries the post-translational modification N-acetylmethionine. Positions 1 to 24 (METQTVQQELESLPTTKMAQTNPM) are disordered. The N-terminal arm stretch occupies residues 1–30 (METQTVQQELESLPTTKMAQTNPMPGSVGP). Glu2 is modified (N-acetylalanine). Beta/gamma crystallin 'Greek key' domains lie at 31–70 (WKIT…KVEC) and 71–117 (GAWV…RPIC). S-glutathionyl cysteine; alternate is present on residues Cys82 and Cys117. 2 positions are modified to S-methylcysteine; alternate: Cys82 and Cys117. The interval 118 to 123 (SANHKE) is connecting peptide. Beta/gamma crystallin 'Greek key' domains lie at 124 to 165 (SKIT…KIQC) and 166 to 214 (GAWV…RRIQ).

It belongs to the beta/gamma-crystallin family. As to quaternary structure, homo/heterodimer, or complexes of higher-order. The structure of beta-crystallin oligomers seems to be stabilized through interactions between the N-terminal arms. Interacts with CRYBA1. In terms of processing, specific cleavages in the N-terminal arm occur during lens maturation and give rise to several truncated forms. Isoform A1 contains a N-acetylalanine at position 2.

Crystallins are the dominant structural components of the vertebrate eye lens. The chain is Beta-crystallin A3 from Bos taurus (Bovine).